We begin with the raw amino-acid sequence, 756 residues long: Serine/threonine-protein kinase CBK1 (756 aa).

Disordered regions lie at residues 1–180 (MYNS…SYSS) and 242–261 (QQQQQQQSQSPVQSGFNNGT). The span at 23 to 34 (QQQDQQHQQQQQ) shows a compositional bias: low complexity. Positions 53-77 (FSSNYMKEQGSHQSLQEHLQRETGN) are enriched in polar residues. Thr-109 is modified (phosphothreonine). The segment covering 120 to 180 (HNNNSQSMVQ…TLRSNGSYSS (61 aa)) has biased composition (polar residues). The span at 242-255 (QQQQQQQSQSPVQS) shows a compositional bias: low complexity. Residues 352 to 672 (FHTVKVIGKG…ADEIKSHPFF (321 aa)) form the Protein kinase domain. ATP-binding positions include 358–366 (IGKGAFGEV) and Lys-381. Asp-475 serves as the catalytic Proton acceptor. Residues 673 to 754 (RGVDWNTIRQ…SRFDYLTRKN (82 aa)) enclose the AGC-kinase C-terminal domain. The interval 707-732 (NVPDSPAMAQAAKQREQMTKQGGSAP) is disordered.

Belongs to the protein kinase superfamily. STE Ser/Thr protein kinase family. COT1 subfamily. Associates with PAG1/TAO3 and interacts with MOB2.

The enzyme catalyses L-seryl-[protein] + ATP = O-phospho-L-seryl-[protein] + ADP + H(+). The catalysed reaction is L-threonyl-[protein] + ATP = O-phospho-L-threonyl-[protein] + ADP + H(+). Protein kinase that seems to play a role in the regulation of cell morphogenesis and proliferation. The sequence is that of Serine/threonine-protein kinase CBK1 (CBK1) from Saccharomyces cerevisiae (strain ATCC 204508 / S288c) (Baker's yeast).